A 170-amino-acid polypeptide reads, in one-letter code: Cyclic pyranopterin monophosphate synthase (170 aa).

Substrate contacts are provided by residues Leu75–His77 and Met113–Glu114. The active site involves Asp128.

The protein belongs to the MoaC family. Homohexamer; trimer of dimers.

It catalyses the reaction (8S)-3',8-cyclo-7,8-dihydroguanosine 5'-triphosphate = cyclic pyranopterin phosphate + diphosphate. It functions in the pathway cofactor biosynthesis; molybdopterin biosynthesis. In terms of biological role, catalyzes the conversion of (8S)-3',8-cyclo-7,8-dihydroguanosine 5'-triphosphate to cyclic pyranopterin monophosphate (cPMP). In Pelotomaculum thermopropionicum (strain DSM 13744 / JCM 10971 / SI), this protein is Cyclic pyranopterin monophosphate synthase.